A 206-amino-acid polypeptide reads, in one-letter code: Phosphatidyl-N-methylethanolamine N-methyltransferase (206 aa).

Residues 1–20 are Lumenal-facing; the sequence is MKESVQEIIQQLIHSVDLQS. The helical intramembrane region spans 21–41; that stretch reads SKFQLAIVCTMFNPIFWNIVA. Topologically, residues 42-53 are lumenal; sequence RMEYHKHSLTKM. Residues 54-74 form a helical membrane-spanning segment; the sequence is CGGARKGCYMLAATIFSLGIV. At 75–101 the chain is on the cytoplasmic side; the sequence is RDMVYESALREQPTCSLITGENWTKLG. Residues 102 to 122 form a helical membrane-spanning segment; it reads VALFGLGQVLVLSSMYKLGIT. An S-adenosyl-L-methionine-binding site is contributed by 106–108; that stretch reads GLG. Residues 123–165 lie on the Lumenal side of the membrane; the sequence is GTYLGDYFGILMDERVTGFPFNVSNNPMYQGSTLSFLGIALYK. Residues 166–186 form a helical membrane-spanning segment; that stretch reads GKPAGLVVSAVVYFMYKIALR. Over 187–206 the chain is Cytoplasmic; that stretch reads WEEPFTAMIYANRDKAKKNM. Residue 188-189 coordinates S-adenosyl-L-methionine; it reads EE.

Belongs to the class VI-like SAM-binding methyltransferase superfamily. PEMT/PEM2 methyltransferase family.

It localises to the endoplasmic reticulum membrane. Its subcellular location is the mitochondrion membrane. It catalyses the reaction a 1,2-diacyl-sn-glycero-3-phosphoethanolamine + S-adenosyl-L-methionine = a 1,2-diacyl-sn-glycero-3-phospho-N-methylethanolamine + S-adenosyl-L-homocysteine + H(+). The catalysed reaction is a 1,2-diacyl-sn-glycero-3-phospho-N-methylethanolamine + S-adenosyl-L-methionine = a 1,2-diacyl-sn-glycero-3-phospho-N,N-dimethylethanolamine + S-adenosyl-L-homocysteine + H(+). It carries out the reaction a 1,2-diacyl-sn-glycero-3-phospho-N,N-dimethylethanolamine + S-adenosyl-L-methionine = a 1,2-diacyl-sn-glycero-3-phosphocholine + S-adenosyl-L-homocysteine + H(+). Its pathway is phospholipid metabolism; phosphatidylcholine biosynthesis. Functionally, catalyzes the second two steps of the methylation pathway of phosphatidylcholine biosynthesis, the SAM-dependent methylation of phosphatidylmonomethylethanolamine (PMME) to phosphatidyldimethylethanolamine (PDME) and of PDME to phosphatidylcholine (PC). Can also catalyze the first methylation reaction of PE to PMME in the absence of PE methyltransferase CHO2. The sequence is that of Phosphatidyl-N-methylethanolamine N-methyltransferase from Saccharomyces cerevisiae (strain ATCC 204508 / S288c) (Baker's yeast).